Here is a 321-residue protein sequence, read N- to C-terminus: MSRPERLQPGVKLRDADKVARIPVKVVPSERETMLRKPDWLRVKLPASSQRIDDIKKALRKNELHSVCEEASCPNLAECFNHGTATFMILGAICTRRCPFCDVAHGRPLKPDANEPKKMAQTIKDMKLKYVVITSVDRDDLRDGGAQHFADCIREIRLLNPSIKIEILVPDFRGRIDAALDILATEPPDVFNHNLETAPMHYRKARPGANYQWSLDLLKKFKERHPDIPTKSGLMMGLGETNDQIAEVLKDLRAHNVEMLTLGQYLQPSKFHLRVERYVPPAEFDELREFAESIGFTHAACGPMVRSSYHADLQAQGKEVK.

Residues Cys68, Cys73, Cys79, Cys94, Cys98, Cys101, and Ser308 each coordinate [4Fe-4S] cluster. The region spanning 80–297 (FNHGTATFMI…REFAESIGFT (218 aa)) is the Radical SAM core domain.

The protein belongs to the radical SAM superfamily. Lipoyl synthase family. [4Fe-4S] cluster is required as a cofactor.

The protein resides in the cytoplasm. The catalysed reaction is [[Fe-S] cluster scaffold protein carrying a second [4Fe-4S](2+) cluster] + N(6)-octanoyl-L-lysyl-[protein] + 2 oxidized [2Fe-2S]-[ferredoxin] + 2 S-adenosyl-L-methionine + 4 H(+) = [[Fe-S] cluster scaffold protein] + N(6)-[(R)-dihydrolipoyl]-L-lysyl-[protein] + 4 Fe(3+) + 2 hydrogen sulfide + 2 5'-deoxyadenosine + 2 L-methionine + 2 reduced [2Fe-2S]-[ferredoxin]. It functions in the pathway protein modification; protein lipoylation via endogenous pathway; protein N(6)-(lipoyl)lysine from octanoyl-[acyl-carrier-protein]: step 2/2. Functionally, catalyzes the radical-mediated insertion of two sulfur atoms into the C-6 and C-8 positions of the octanoyl moiety bound to the lipoyl domains of lipoate-dependent enzymes, thereby converting the octanoylated domains into lipoylated derivatives. This Shewanella sediminis (strain HAW-EB3) protein is Lipoyl synthase.